Consider the following 208-residue polypeptide: N-(5'-phosphoribosyl)anthranilate isomerase (208 aa).

This sequence belongs to the TrpF family.

It catalyses the reaction N-(5-phospho-beta-D-ribosyl)anthranilate = 1-(2-carboxyphenylamino)-1-deoxy-D-ribulose 5-phosphate. It participates in amino-acid biosynthesis; L-tryptophan biosynthesis; L-tryptophan from chorismate: step 3/5. This is N-(5'-phosphoribosyl)anthranilate isomerase from Dechloromonas aromatica (strain RCB).